Consider the following 364-residue polypeptide: Fructose-bisphosphate aldolase A (364 aa).

A Phosphotyrosine modification is found at tyrosine 5. Threonine 9 is modified (phosphothreonine). Serine 36 and serine 39 each carry phosphoserine. Lysine 42 bears the N6-acetyllysine; alternate mark. Lysine 42 is covalently cross-linked (Glycyl lysine isopeptide (Lys-Gly) (interchain with G-Cter in SUMO1); alternate). A Glycyl lysine isopeptide (Lys-Gly) (interchain with G-Cter in SUMO2); alternate cross-link involves residue lysine 42. Arginine 43 is a beta-D-fructose 1,6-bisphosphate binding site. Serine 46 bears the Phosphoserine mark. Lysine 99 bears the N6-(2-hydroxyisobutyryl)lysine mark. N6-acetyllysine is present on lysine 108. Lysine 111 bears the N6-acetyllysine; alternate mark. N6-malonyllysine; alternate is present on lysine 111. Serine 132 carries the post-translational modification Phosphoserine. N6-(2-hydroxyisobutyryl)lysine is present on lysine 147. Glutamate 188 (proton acceptor) is an active-site residue. Lysine 230 (schiff-base intermediate with dihydroxyacetone-P) is an active-site residue. Serine 272 bears the Phosphoserine mark. Beta-D-fructose 1,6-bisphosphate contacts are provided by residues 272–274 (SGG), serine 301, and arginine 304. Lysine 312 bears the N6-malonyllysine mark. Lysine 330 carries the post-translational modification N6-acetyllysine.

It belongs to the class I fructose-bisphosphate aldolase family. Homotetramer. Interacts with SNX9 and WAS. Interacts with FBP2; the interaction blocks FBP2 inhibition by physiological concentrations of AMP and reduces inhibition by Ca(2+).

Its subcellular location is the cytoplasm. It is found in the myofibril. The protein localises to the sarcomere. The protein resides in the i band. It localises to the m line. The catalysed reaction is beta-D-fructose 1,6-bisphosphate = D-glyceraldehyde 3-phosphate + dihydroxyacetone phosphate. It participates in carbohydrate degradation; glycolysis; D-glyceraldehyde 3-phosphate and glycerone phosphate from D-glucose: step 4/4. Functionally, catalyzes the reversible conversion of beta-D-fructose 1,6-bisphosphate (FBP) into two triose phosphate and plays a key role in glycolysis and gluconeogenesis. In addition, may also function as scaffolding protein. The polypeptide is Fructose-bisphosphate aldolase A (Aldoa) (Mus musculus (Mouse)).